The chain runs to 526 residues: MSVEVEYLQHEDYLYRTSKLKEIRDLGINPYPYQYTDCLEVQEIRNQFVDNELGDSEAAFRKETPKVRFAGRLVLFRSMGKNSFGQILDNDAKIQVMFNRDFSAVAGLAADAGISPIKFIEKKLDLGDILGLEGYLFFTHSGELTVLVETVTLLCKSLISLPDKHAGLADKEIRYRKRWADLISSEDVRKTFLTRSRILKLIREYMDQQSFLEVETPILQTIYGGAEATPFVTTLQALHAEMFLRISLEIALKKLLVGGMSRVYEIGKVFRNEGIDRTHNPEFTMIEAYAAYWDYNDVMKCVENLVEYIVRALNNGETQVQYSHLKSGPQVVDFKAPWIRMTMKESISVYGGVDVDLHADHELRKILETQTSLPEKTYVHASRGELIALLFDELVCDKLIAPHHITDHPLETTPLCKTLRSGDETLVERFESFCLGKELCNAYSELNDPLQQRKLLEEQMRKKALNPDSEYHPIDEEFLEALCQGMPPAGGFGIGIDRLVMMLTDAASIRDVLFFPVMRRIEAKKD.

Residues glutamate 431 and glutamate 438 each contribute to the Mg(2+) site.

The protein belongs to the class-II aminoacyl-tRNA synthetase family. In terms of assembly, homodimer. Mg(2+) is required as a cofactor.

It localises to the cytoplasm. The enzyme catalyses tRNA(Lys) + L-lysine + ATP = L-lysyl-tRNA(Lys) + AMP + diphosphate. In Chlamydia trachomatis serovar D (strain ATCC VR-885 / DSM 19411 / UW-3/Cx), this protein is Lysine--tRNA ligase (lysS).